A 147-amino-acid chain; its full sequence is MSNFTAEDKAAITSLWGKVNVEDAGGETLGRLLVVYPWTQRFFDSFGSLSSPSAIMGNPKVKAHGVKVLTSLGEAIKNLDDLKGTFDQLSELHCDKLHVDPENFRLLGNVLVTVLAILHGKEFTPEVQASRQKMVAGVASALGSRYH.

Residues 3–147 (NFTAEDKAAI…VASALGSRYH (145 aa)) form the Globin domain. Residue threonine 13 is modified to Phosphothreonine. A phosphoserine mark is found at serine 45, serine 51, and serine 53. Lysine 60 carries the N6-acetyllysine modification. Position 64 (histidine 64) interacts with heme b. Lysine 83 bears the N6-acetyllysine mark. Residue histidine 93 coordinates heme b. Cysteine 94 bears the S-nitrosocysteine mark. Serine 140 carries the phosphoserine modification.

It belongs to the globin family. Heterotetramer of two alpha chains and two gamma chains in fetal hemoglobin (Hb F). In terms of tissue distribution, red blood cells.

Functionally, gamma chains make up the fetal hemoglobin F, in combination with alpha chains. This is Hemoglobin subunit gamma-1 (HBG1) from Plecturocebus moloch (Dusky titi monkey).